We begin with the raw amino-acid sequence, 311 residues long: GTP cyclohydrolase FolE2 (311 aa).

Belongs to the GTP cyclohydrolase IV family.

It carries out the reaction GTP + H2O = 7,8-dihydroneopterin 3'-triphosphate + formate + H(+). It participates in cofactor biosynthesis; 7,8-dihydroneopterin triphosphate biosynthesis; 7,8-dihydroneopterin triphosphate from GTP: step 1/1. Converts GTP to 7,8-dihydroneopterin triphosphate. This is GTP cyclohydrolase FolE2 from Hydrogenovibrio crunogenus (strain DSM 25203 / XCL-2) (Thiomicrospira crunogena).